The primary structure comprises 398 residues: Methionine aminopeptidase 1A (398 aa).

A2 is modified (N-acetylalanine). The C6H2-type zinc finger occupies 12-65 (TLSCARCEKPAHLQCPKCIDLKLPREQASFCTQECFKAAWSSHKSVHVKAQLSS). Zn(2+) contacts are provided by C15, C18, C26, C29, C42, C46, H54, and H58. H214 is an a protein binding site. 3 residues coordinate Zn(2+): D231, D242, and H305. An a protein-binding site is contributed by H312. Zn(2+)-binding residues include E338 and E369.

Belongs to the peptidase M24A family. Methionine aminopeptidase type 1 subfamily. In terms of assembly, associates with the 60S ribosomal subunit of the 80S translational complex. Zn(2+) is required as a cofactor. Requires Co(2+) as cofactor. It depends on Mn(2+) as a cofactor. Fe(2+) serves as cofactor. In terms of tissue distribution, ubiquitous.

It is found in the cytoplasm. The catalysed reaction is Release of N-terminal amino acids, preferentially methionine, from peptides and arylamides.. Functionally, cotranslationally removes the N-terminal methionine from nascent proteins. The N-terminal methionine is often cleaved when the second residue in the primary sequence is small and uncharged (Met-Ala-, Cys, Gly, Pro, Ser, Thr, or Val). This Arabidopsis thaliana (Mouse-ear cress) protein is Methionine aminopeptidase 1A (MAP1A).